The following is a 1274-amino-acid chain: MSSSQDYNNNSNNTPARVSSRKGKNLHVAHRRSPSELTNLMVEQYNLQRQLEEVQAQQKLLEEKQKQQQQQFTYPSAQGSSELAPPPISSGYGGNRSSHSRSSSINTHRRTGSGSGGTAHGHSRRHSLGLNEAIKAAANQKQSNRNSLSPTIPNEAKTDSSDDIGSFKFPPSGGDQGDTSGQSSSSHNRSRSLAYGQQSFKFPPTPDQSNDTRGNSLLPPNPNFSVTQSPDRGHNRRSSHFRTGSRGSGSNTNTDGINSNWRAQQQSPQQQQRQGGLLEPPQVGFTPGHKPRNSSYGGGSSVSSLQQFLPNNGGSNNSGQQGGHQGGGNNGRKTLFAPYLPQSSLPELINEGRLVTGTLRVNKKNRSDAYVSTDGLLDADIFICGSKDRNRALEGDLVAVELLIVDEVWESKKEKEEKKRRKDNTLHSRPLTDDIHNDATSAPNTAEGSVTGTSKEDGAGSNEEETGGLARRGSLKQRPTMKKNDDVEVEGQSLLLVEEEEINDEIKPLYAGHVVAVVDRIPGQLFAGTLGLLRPAQAAQAARDKKNGKESTVQNPKAPKIVWFKPTDKKVPLIAIPTEQAPKDFVENHEKYADRLFVASIKRWPITSLHPFGTLVSNLGPIDSPETEIDSILRDNNFLCDEYPDDDNDDIVSVNAYDLPSIEPEFENTQREEYLNDYIIAFTQNGEFVDHALHVKRISNTKIELGFHVADIAYFIKPGSSLDRKSKKRSSSVFLPQKTVNLFPKQVNKIVSFKENEKNLAVSVVFEIDTSNFEVEDLYIHESVIVPKQLVTYDAFDTILSGQSVDSISSATSDYVKTFSLIAKEFRRHRLSNRSLGITPNLTLLDQLDDEKVRLDLNIFKDSLAFDVISEISHKVNSAIAAKVHAGLGDQAILRRHPLPTLQKMETFVRKATSLGFKIDTTTSSTLQNSILKIDDPVKRKCVETLLYKCMSRGRYYVAGKQDTDSYAHYYFNLPLYTHFTAPLRRYADLIVHRQLKAVLNKQVEDKDLDSLKAITDYCNFKKDCAANAQEQAIHLLLSQTINEMSETAGQLLCMGTVVQVYESSFDVFIPEFGVEKRVHGDQLPLVKAEFDKNERILELWWEKGVDSATYIPPDEKSSLSYRNSIKNKYRTSALQAAKIQSKTALEKSTTPADSVAEKLAKLNLEPPKLVVPSLKSNELHEVEKDETKSMPSSPTQSEIPKNVRTNSSSRISSSGNTFSLEPYLQNTITRIEGDSYIQVIKELTQVPVLLRAEIGMALPCLTVRVLNPFAEEQ.

The segment covering 1-13 (MSSSQDYNNNSNN) has biased composition (low complexity). Disordered stretches follow at residues 1 to 38 (MSSS…SELT), 61 to 124 (LEEK…GHSR), 138 to 337 (ANQK…TLFA), and 413 to 488 (KEKE…DDVE). Basic residues predominate over residues 19 to 32 (SSRKGKNLHVAHRR). A compositionally biased stretch (polar residues) spans 72-81 (FTYPSAQGSS). Positions 95-106 (NRSSHSRSSSIN) are enriched in low complexity. Positions 139 to 152 (NQKQSNRNSLSPTI) are enriched in polar residues. The span at 177-187 (GDTSGQSSSSH) shows a compositional bias: low complexity. Over residues 248-263 (SGSNTNTDGINSNWRA) the composition is skewed to polar residues. Residues 264–282 (QQQSPQQQQRQGGLLEPPQ) are compositionally biased toward low complexity. The segment covering 320–330 (QQGGHQGGGNN) has biased composition (gly residues). Positions 413–437 (KEKEEKKRRKDNTLHSRPLTDDIHN) are enriched in basic and acidic residues. The segment covering 438 to 453 (DATSAPNTAEGSVTGT) has biased composition (polar residues). The region spanning 562-637 (VWFKPTDKKV…EIDSILRDNN (76 aa)) is the CSD2 domain. Residues 688–1001 (FVDHALHVKR…VHRQLKAVLN (314 aa)) enclose the RNB domain. The region spanning 1050–1136 (GQLLCMGTVV…KNKYRTSALQ (87 aa)) is the DIS3L2 C-terminal domain. Residues 1174–1217 (SLKSNELHEVEKDETKSMPSSPTQSEIPKNVRTNSSSRISSSGN) are disordered. Basic and acidic residues predominate over residues 1178–1189 (NELHEVEKDETK). The segment covering 1190–1207 (SMPSSPTQSEIPKNVRTN) has biased composition (polar residues).

It belongs to the RNR ribonuclease family.

Functionally, plays a role in resistance to host antimicrobial peptides such as protamine, RP-1, or human beta-defensin-2; allowing colonization of human tissues. Required for resistance to membrane permeabilization and maintenance of mitochondrial membrane potential upon exposure to RP-1. This Candida albicans (strain SC5314 / ATCC MYA-2876) (Yeast) protein is Virulence protein SSD1 (SSD1).